A 1790-amino-acid chain; its full sequence is Protein FAM186A (1790 aa).

This sequence belongs to the FAM186 family.

The chain is Protein FAM186A (FAM186A) from Mus musculus (Mouse).